The primary structure comprises 224 residues: Putative N-acetylmannosamine-6-phosphate 2-epimerase (224 aa).

Belongs to the NanE family.

It catalyses the reaction an N-acyl-D-glucosamine 6-phosphate = an N-acyl-D-mannosamine 6-phosphate. The protein operates within amino-sugar metabolism; N-acetylneuraminate degradation; D-fructose 6-phosphate from N-acetylneuraminate: step 3/5. Functionally, converts N-acetylmannosamine-6-phosphate (ManNAc-6-P) to N-acetylglucosamine-6-phosphate (GlcNAc-6-P). This is Putative N-acetylmannosamine-6-phosphate 2-epimerase from Staphylococcus carnosus (strain TM300).